The chain runs to 165 residues: Ecotin-like protein 4 (165 aa).

Belongs to the protease inhibitor I11 (ecotin) family.

This is Ecotin-like protein 4 from Trypanosoma brucei brucei (strain 927/4 GUTat10.1).